We begin with the raw amino-acid sequence, 247 residues long: uncharacterized protein (247 aa).

The N-terminal stretch at 1–35 (MWGPGVTAEGLSVAPAPPPLLPLLLLLALALVAPS) is a signal peptide. A helical membrane pass occupies residues 82 to 102 (LSGLLILLVLFAIGYFLQRII). Positions 109–176 (YPRGQARPGQ…RGSGGRLPPS (68 aa)) are disordered. Residues 111–120 (RGQARPGQAR) show a composition bias toward low complexity. A compositionally biased stretch (gly residues) spans 161 to 171 (SGGGRGRGSGG).

Its subcellular location is the membrane. This is an uncharacterized protein from Mus musculus (Mouse).